We begin with the raw amino-acid sequence, 168 residues long: Pathogenesis-related protein 1C (168 aa).

Residues 1–30 form the signal peptide; sequence MEFVLFSQMSSFFLVSTLLLFLIISHSCHA. One can recognise an SCP domain in the interval 38–156; sequence LDAHNTARAD…NGGYIVSCNY (119 aa).

This sequence belongs to the CRISP family. Three disulfide bonds are present.

It localises to the vacuole. Functionally, probably involved in the defense reaction of plants against pathogens. The chain is Pathogenesis-related protein 1C from Nicotiana tabacum (Common tobacco).